Here is a 795-residue protein sequence, read N- to C-terminus: Probable alpha,alpha-trehalose-phosphate synthase [UDP-forming] 4 (795 aa).

The tract at residues P4–L469 is glycosyltransferase.

It in the N-terminal section; belongs to the glycosyltransferase 20 family. In the C-terminal section; belongs to the trehalose phosphatase family.

It carries out the reaction D-glucose 6-phosphate + UDP-alpha-D-glucose = alpha,alpha-trehalose 6-phosphate + UDP + H(+). This chain is Probable alpha,alpha-trehalose-phosphate synthase [UDP-forming] 4 (TPS4), found in Arabidopsis thaliana (Mouse-ear cress).